We begin with the raw amino-acid sequence, 415 residues long: Diaminopimelate decarboxylase (415 aa).

K60 carries the post-translational modification N6-(pyridoxal phosphate)lysine. Residues G239 and 273–276 (EPGR) each bind pyridoxal 5'-phosphate. 3 residues coordinate substrate: R276, R312, and Y316. The active-site Proton donor is C342. Substrate-binding residues include E343 and Y370. Y370 serves as a coordination point for pyridoxal 5'-phosphate.

This sequence belongs to the Orn/Lys/Arg decarboxylase class-II family. LysA subfamily. In terms of assembly, homodimer. Requires pyridoxal 5'-phosphate as cofactor.

It catalyses the reaction meso-2,6-diaminopimelate + H(+) = L-lysine + CO2. It functions in the pathway amino-acid biosynthesis; L-lysine biosynthesis via DAP pathway; L-lysine from DL-2,6-diaminopimelate: step 1/1. Its function is as follows. Specifically catalyzes the decarboxylation of meso-diaminopimelate (meso-DAP) to L-lysine. The chain is Diaminopimelate decarboxylase from Pseudomonas aeruginosa (strain ATCC 15692 / DSM 22644 / CIP 104116 / JCM 14847 / LMG 12228 / 1C / PRS 101 / PAO1).